Consider the following 426-residue polypeptide: Serine--tRNA ligase (426 aa).

233–235 serves as a coordination point for L-serine; that stretch reads TSE. 264-266 contributes to the ATP binding site; sequence RAE. Residue glutamate 287 coordinates L-serine. 351–354 contributes to the ATP binding site; that stretch reads EISS. L-serine is bound at residue serine 387.

The protein belongs to the class-II aminoacyl-tRNA synthetase family. Type-1 seryl-tRNA synthetase subfamily. Homodimer. The tRNA molecule binds across the dimer.

The protein localises to the cytoplasm. The enzyme catalyses tRNA(Ser) + L-serine + ATP = L-seryl-tRNA(Ser) + AMP + diphosphate + H(+). The catalysed reaction is tRNA(Sec) + L-serine + ATP = L-seryl-tRNA(Sec) + AMP + diphosphate + H(+). Its pathway is aminoacyl-tRNA biosynthesis; selenocysteinyl-tRNA(Sec) biosynthesis; L-seryl-tRNA(Sec) from L-serine and tRNA(Sec): step 1/1. Its function is as follows. Catalyzes the attachment of serine to tRNA(Ser). Is also able to aminoacylate tRNA(Sec) with serine, to form the misacylated tRNA L-seryl-tRNA(Sec), which will be further converted into selenocysteinyl-tRNA(Sec). The chain is Serine--tRNA ligase from Stenotrophomonas maltophilia (strain K279a).